The primary structure comprises 450 residues: Neutral protease 2 homolog AFUB_070680 (450 aa).

An N-terminal signal peptide occupies residues 1-19 (MKITALASAILAVAQGALA). Positions 20–172 (LPARAPALDI…PASIKPLDRR (153 aa)) are excised as a propeptide. Intrachain disulfides connect cysteine 179-cysteine 251 and cysteine 258-cysteine 276. Histidine 300 is a binding site for Zn(2+). Residue glutamate 301 is part of the active site. Residues histidine 304 and aspartate 315 each coordinate Zn(2+). Residues 364 to 392 (QPGQTEPGTQTMWDGYSQPGQTEPGTQTM) are compositionally biased toward polar residues. A disordered region spans residues 364-416 (QPGQTEPGTQTMWDGYSQPGQTEPGTQTMWDGYSQPGQTEPGTQTTWDGYSQP). The span at 398–409 (QPGQTEPGTQTT) shows a compositional bias: low complexity.

This sequence belongs to the peptidase M35 family. Zn(2+) is required as a cofactor.

It is found in the secreted. The enzyme catalyses Preferential cleavage of bonds with hydrophobic residues in P1'. Also 3-Asn-|-Gln-4 and 8-Gly-|-Ser-9 bonds in insulin B chain.. In terms of biological role, secreted metalloproteinase that allows assimilation of proteinaceous substrates. Shows high activities on basic nuclear substrates such as histone and protamine. May be involved in virulence. The sequence is that of Neutral protease 2 homolog AFUB_070680 from Aspergillus fumigatus (strain ATCC MYA-4609 / CBS 101355 / FGSC A1100 / Af293) (Neosartorya fumigata).